The primary structure comprises 414 residues: MTIKSLALQCRDAAQVLSQLSADAKQALLLAMANALDTDATQILQANQRDVDAAREKGTGAAMLDRLTLTPARLSAVGAALREVAVLPDPVGQVTRDDVRPNGIRVQKVRVPLGVIAMIYEARPNVTADAAALCIKAGNGVILRGGSEAIHSNTAIARALQRALREAGVPEAALTLVEDLRRETMLELLQLSDIVDLAIPRGGEGLIRFVAEHARVPVIKHYKGVCHLFVDASADVDLAVRLLVDGKASRPSACNSLETLLVHADIAERFLPAAAAALRARNVELRGDAATRAVLPEIAAASDDDYAAEFLDLILAIRVVPDLDTALAHIRQYGSDHTEVIATQTPANAETFVQSLRSAVVMVNASSRFSDGGELGLGAEIGISTTRLHSYGPMGLEALTVERFVVRGEGQVRH.

The protein belongs to the gamma-glutamyl phosphate reductase family.

The protein resides in the cytoplasm. The enzyme catalyses L-glutamate 5-semialdehyde + phosphate + NADP(+) = L-glutamyl 5-phosphate + NADPH + H(+). Its pathway is amino-acid biosynthesis; L-proline biosynthesis; L-glutamate 5-semialdehyde from L-glutamate: step 2/2. In terms of biological role, catalyzes the NADPH-dependent reduction of L-glutamate 5-phosphate into L-glutamate 5-semialdehyde and phosphate. The product spontaneously undergoes cyclization to form 1-pyrroline-5-carboxylate. This is Gamma-glutamyl phosphate reductase from Xanthomonas campestris pv. campestris (strain 8004).